The following is a 198-amino-acid chain: Ras-related protein Rab-34, isoform NARR (198 aa).

13 tandem repeats follow at residues P7–R15, P16–R24, P25–R33, P34–R42, A43–P51, R52–S60, P61–T69, P70–S78, P79–S87, P88–S96, P97–S105, P106–T114, and P115–S123. A 13 x 9 AA approximate tandem-repeats of P-R-V-I-V-G-(S/T)-P-R region spans residues P7–R125. Position 13 is a phosphoserine (S13). The interval I37–R64 is disordered. T69 is modified (phosphothreonine). A phosphoserine mark is found at S78, S87, and S96. The span at V94–V121 shows a compositional bias: low complexity. Residues V94–I198 are disordered. S123 carries the post-translational modification Phosphoserine. The segment covering R145–G157 has biased composition (basic and acidic residues). Residues G161–R178 show a composition bias toward low complexity.

May interact with EIF5A and ERF1. Phosphorylated during M-phase.

Its subcellular location is the nucleus. It is found in the nucleolus. The chain is Ras-related protein Rab-34, isoform NARR (RAB34) from Homo sapiens (Human).